The primary structure comprises 55 residues: Large ribosomal subunit protein bL33 (55 aa).

The protein belongs to the bacterial ribosomal protein bL33 family.

This Acidiphilium cryptum (strain JF-5) protein is Large ribosomal subunit protein bL33.